The primary structure comprises 1231 residues: Chromosome-associated kinesin KIF4 (1231 aa).

Residues 9 to 337 enclose the Kinesin motor domain; it reads PVRVALRCRP…LRYADRARKI (329 aa). 88-95 contributes to the ATP binding site; that stretch reads GQTGSGKT. The stretch at 351–1000 forms a coiled coil; that stretch reads ELNHLKQQVQ…IKQKLTLLQV (650 aa). Residue Ser-395 is modified to Phosphoserine. Phosphothreonine is present on Thr-800. Phosphoserine is present on residues Ser-802, Ser-811, and Ser-816. A globular region spans residues 1001–1231; the sequence is ASKQKPHLTR…GCSPIQEESH (231 aa). The segment at 1189–1212 is disordered; the sequence is HPELKSIASESQENKAIGKKKKRA. A phosphoserine mark is found at Ser-1224 and Ser-1230.

The protein belongs to the TRAFAC class myosin-kinesin ATPase superfamily. Kinesin family. Chromokinesin subfamily. The cofactor is [2Fe-2S] cluster. It depends on [4Fe-4S] cluster as a cofactor. As to expression, expressed in pyramidal cells in juvenile hippocampus, granular cells in juvenile cerebellar cortex and in adult spleen.

Its subcellular location is the nucleus. It is found in the chromosome. The protein localises to the cytoplasm. The protein resides in the cytoskeleton. Functionally, iron-sulfur (Fe-S) cluster binding motor protein that has a role in chromosome segregation during mitosis. Required for mitotic chromosomal positioning and bipolar spindle stabilization. The protein is Chromosome-associated kinesin KIF4 (Kif4) of Mus musculus (Mouse).